Here is a 513-residue protein sequence, read N- to C-terminus: Zinc finger CCCH-type with G patch domain-containing protein (513 aa).

The segment at 155-178 adopts a C3H1-type zinc-finger fold; that stretch reads PCSYYLEGECRFDETKCRFSHGAL. 2 stretches are compositionally biased toward acidic residues: residues 252 to 261 and 271 to 283; these read DQDEDDELSS and DSSDEAESDMDDL. The disordered stretch occupies residues 252–283; that stretch reads DQDEDDELSSEESNSSMNDDSSDEAESDMDDL. In terms of domain architecture, G-patch spans 312-358; the sequence is TRGIGSKLMEKMGYIHGTGLGSDGRGIVTPVSAQILPQGRSLDACME. Basic and acidic residues predominate over residues 455–467; sequence DMAKVKQSLDRNS. The interval 455–513 is disordered; that stretch reads DMAKVKQSLDRNSGDAQLQKRLQVQMESHKQELATLQAQERSLSKEQQTRKSKNKMFEF. Residues 468–480 are compositionally biased toward polar residues; sequence GDAQLQKRLQVQM. The segment covering 496-513 has biased composition (basic and acidic residues); that stretch reads SLSKEQQTRKSKNKMFEF.

Its subcellular location is the nucleus. Transcription repressor. This Drosophila yakuba (Fruit fly) protein is Zinc finger CCCH-type with G patch domain-containing protein.